The chain runs to 287 residues: ATP synthase gamma chain (287 aa).

It belongs to the ATPase gamma chain family. As to quaternary structure, F-type ATPases have 2 components, CF(1) - the catalytic core - and CF(0) - the membrane proton channel. CF(1) has five subunits: alpha(3), beta(3), gamma(1), delta(1), epsilon(1). CF(0) has three main subunits: a, b and c.

It localises to the cell membrane. Its function is as follows. Produces ATP from ADP in the presence of a proton gradient across the membrane. The gamma chain is believed to be important in regulating ATPase activity and the flow of protons through the CF(0) complex. The polypeptide is ATP synthase gamma chain (Wolbachia sp. subsp. Drosophila simulans (strain wRi)).